The sequence spans 316 residues: 4-hydroxy-3-methylbut-2-enyl diphosphate reductase (316 aa).

A [4Fe-4S] cluster-binding site is contributed by cysteine 12. Residues histidine 41 and histidine 74 each coordinate (2E)-4-hydroxy-3-methylbut-2-enyl diphosphate. Dimethylallyl diphosphate is bound by residues histidine 41 and histidine 74. Isopentenyl diphosphate is bound by residues histidine 41 and histidine 74. Cysteine 96 contributes to the [4Fe-4S] cluster binding site. Residue histidine 124 coordinates (2E)-4-hydroxy-3-methylbut-2-enyl diphosphate. Histidine 124 contacts dimethylallyl diphosphate. An isopentenyl diphosphate-binding site is contributed by histidine 124. Residue glutamate 126 is the Proton donor of the active site. (2E)-4-hydroxy-3-methylbut-2-enyl diphosphate is bound at residue threonine 169. A [4Fe-4S] cluster-binding site is contributed by cysteine 199. Serine 227, serine 228, asparagine 229, and serine 271 together coordinate (2E)-4-hydroxy-3-methylbut-2-enyl diphosphate. Serine 227, serine 228, asparagine 229, and serine 271 together coordinate dimethylallyl diphosphate. Positions 227, 228, 229, and 271 each coordinate isopentenyl diphosphate.

The protein belongs to the IspH family. It depends on [4Fe-4S] cluster as a cofactor.

It catalyses the reaction isopentenyl diphosphate + 2 oxidized [2Fe-2S]-[ferredoxin] + H2O = (2E)-4-hydroxy-3-methylbut-2-enyl diphosphate + 2 reduced [2Fe-2S]-[ferredoxin] + 2 H(+). It carries out the reaction dimethylallyl diphosphate + 2 oxidized [2Fe-2S]-[ferredoxin] + H2O = (2E)-4-hydroxy-3-methylbut-2-enyl diphosphate + 2 reduced [2Fe-2S]-[ferredoxin] + 2 H(+). It participates in isoprenoid biosynthesis; dimethylallyl diphosphate biosynthesis; dimethylallyl diphosphate from (2E)-4-hydroxy-3-methylbutenyl diphosphate: step 1/1. The protein operates within isoprenoid biosynthesis; isopentenyl diphosphate biosynthesis via DXP pathway; isopentenyl diphosphate from 1-deoxy-D-xylulose 5-phosphate: step 6/6. Functionally, catalyzes the conversion of 1-hydroxy-2-methyl-2-(E)-butenyl 4-diphosphate (HMBPP) into a mixture of isopentenyl diphosphate (IPP) and dimethylallyl diphosphate (DMAPP). Acts in the terminal step of the DOXP/MEP pathway for isoprenoid precursor biosynthesis. The sequence is that of 4-hydroxy-3-methylbut-2-enyl diphosphate reductase from Xanthomonas campestris pv. campestris (strain ATCC 33913 / DSM 3586 / NCPPB 528 / LMG 568 / P 25).